The chain runs to 226 residues: DNA mismatch repair protein MutH (226 aa).

It belongs to the MutH family.

It is found in the cytoplasm. Sequence-specific endonuclease that cleaves unmethylated GATC sequences. It is involved in DNA mismatch repair. The polypeptide is DNA mismatch repair protein MutH (Vibrio parahaemolyticus serotype O3:K6 (strain RIMD 2210633)).